The chain runs to 315 residues: Probable mannose-6-phosphate isomerase GmuF (315 aa).

Positions 95, 97, 115, and 172 each coordinate Zn(2+). The active site involves R192.

It belongs to the mannose-6-phosphate isomerase type 1 family. The cofactor is Zn(2+).

It carries out the reaction D-mannose 6-phosphate = D-fructose 6-phosphate. Functionally, seems to be involved in the degradation of glucomannan. This Bacillus subtilis (strain 168) protein is Probable mannose-6-phosphate isomerase GmuF (gmuF).